A 164-amino-acid polypeptide reads, in one-letter code: Cyclin-dependent kinase inhibitor 1 (164 aa).

Serine 2 is subject to N-acetylserine. A Glycyl serine ester (Ser-Gly) (interchain with G-Cter in ubiquitin) cross-link involves residue serine 2. The C4-type zinc-finger motif lies at 13 to 41 (HGSKACRRLFGPVDSEQLRRDCDALMAGC). The interval 17-24 (ACRRLFGP) is required for binding cyclins. Positions 53-58 (FVTETP) are required for binding CDKs. A disordered region spans residues 80–164 (AGPRGGRDDL…RRLIFSKRKP (85 aa)). The residue at position 114 (serine 114) is a Phosphoserine; by GSK3-beta. Phosphoserine is present on serine 130. The PIP-box K+4 motif motif lies at 140 to 164 (RKRRQTSMTDFYHSKRRLIFSKRKP). Positions 141-156 (KRRQTSMTDFYHSKRR) match the Nuclear localization signal motif. A Phosphothreonine; by PKA, PKB/AKT1, PIM1 and PIM2 modification is found at threonine 145. Phosphoserine; by PKC and NUAK1 is present on serine 146. Residues 152 to 164 (HSKRRLIFSKRKP) form an interaction with TRIM39 region. Positions 153–164 (SKRRLIFSKRKP) are enriched in basic residues. The residue at position 160 (serine 160) is a Phosphoserine.

The protein belongs to the CDI family. In terms of assembly, interacts with HDAC1; the interaction is prevented by competitive binding of C10orf90/FATS to HDAC1 facilitating acetylation and protein stabilization of CDKN1A/p21. Interacts with MKRN1. Interacts with PSMA3. Interacts with PCNA. Component of the ternary complex, cyclin D-CDK4-CDKN1A. Interacts (via its N-terminal domain) with CDK4; the interaction promotes the assembly of the cyclin D-CDK4 complex, its nuclear translocation and promotes the cyclin D-dependent enzyme activity of CDK4. Binding to CDK2 leads to CDK2/cyclin E inactivation at the G1-S phase DNA damage checkpoint, thereby arresting cells at the G1-S transition during DNA repair. Interacts with PIM1. Interacts with STK11 and NUAK1. Interacts with DTL and TRIM39. Interacts with PKP3; the interaction sequesters CDKN1A to the cytoplasm thereby repressing its role as an inhibitor of CDK4- and CDK6-driven RB1 phosphorylation. In terms of processing, phosphorylation of Thr-145 by Akt or of Ser-146 by PKC impairs binding to PCNA. Phosphorylation at Ser-114 by GSK3-beta enhances ubiquitination by the DCX(DTL) complex. Phosphorylation of Thr-145 by PIM2 enhances protein stability and inhibits cell proliferation. Phosphorylation of Thr-145 by PIM1 results in the relocation of CDKN1A to the cytoplasm and enhanced CDKN1A protein stability. UV radiation-induced phosphorylation at Ser-146 by NUAK1 leads to its degradation. Post-translationally, ubiquitinated by MKRN1; leading to polyubiquitination and 26S proteasome-dependent degradation. Ubiquitinated by the DCX(DTL) complex, also named CRL4(CDT2) complex, leading to its degradation during S phase or following UV irradiation. Ubiquitination by the DCX(DTL) complex is essential to control replication licensing and is PCNA-dependent: interacts with PCNA via its PIP-box, while the presence of the containing the 'K+4' motif in the PIP box, recruit the DCX(DTL) complex, leading to its degradation. Ubiquitination at Ser-2 leads to degradation by the proteasome pathway. Ubiquitinated by RNF114; leading to proteasomal degradation. Acetylation leads to protein stability. Acetylated in vitro on Lys-141, Lys-154, Lys-161 and Lys-163. Deacetylation by HDAC1 is prevented by competitive binding of C10orf90/FATS to HDAC1.

It localises to the cytoplasm. Its subcellular location is the nucleus. In terms of biological role, may be involved in p53/TP53 mediated inhibition of cellular proliferation in response to DNA damage. Binds to and inhibits cyclin-dependent kinase activity, preventing phosphorylation of critical cyclin-dependent kinase substrates and blocking cell cycle progression. Functions in the nuclear localization and assembly of cyclin D-CDK4 complex and promotes its kinase activity towards RB1. At higher stoichiometric ratios, inhibits the kinase activity of the cyclin D-CDK4 complex. Inhibits DNA synthesis by DNA polymerase delta by competing with POLD3 for PCNA binding. Plays an important role in controlling cell cycle progression and DNA damage-induced G2 arrest. Negatively regulates the CDK4- and CDK6-driven phosphorylation of RB1 in keratinocytes, thereby resulting in the release of E2F1 and subsequent transcription of E2F1-driven G1/S phase promoting genes. This chain is Cyclin-dependent kinase inhibitor 1 (CDKN1A), found in Felis catus (Cat).